Reading from the N-terminus, the 154-residue chain is 3-dehydroquinate dehydratase (154 aa).

Tyrosine 23 serves as the catalytic Proton acceptor. Substrate contacts are provided by asparagine 75, histidine 81, and aspartate 88. The active-site Proton donor is histidine 101. Residues 102–103 and arginine 112 each bind substrate; that span reads LS.

It belongs to the type-II 3-dehydroquinase family. As to quaternary structure, homododecamer.

It catalyses the reaction 3-dehydroquinate = 3-dehydroshikimate + H2O. The protein operates within metabolic intermediate biosynthesis; chorismate biosynthesis; chorismate from D-erythrose 4-phosphate and phosphoenolpyruvate: step 3/7. Functionally, catalyzes a trans-dehydration via an enolate intermediate. In Teredinibacter turnerae (strain ATCC 39867 / T7901), this protein is 3-dehydroquinate dehydratase.